Consider the following 590-residue polypeptide: Arginine--tRNA ligase (590 aa).

The 'HIGH' region signature appears at 138–148 (ANPTGPLHIGH).

It belongs to the class-I aminoacyl-tRNA synthetase family. Monomer.

The protein resides in the cytoplasm. The catalysed reaction is tRNA(Arg) + L-arginine + ATP = L-arginyl-tRNA(Arg) + AMP + diphosphate. In Orientia tsutsugamushi (strain Ikeda) (Rickettsia tsutsugamushi), this protein is Arginine--tRNA ligase.